The following is a 603-amino-acid chain: Aspartate--tRNA(Asp/Asn) ligase (603 aa).

Positions 205–208 are aspartate; it reads QLFK. Arg227 is an L-aspartate binding site. ATP contacts are provided by residues 227-229 and Gln236; that span reads RDE. L-aspartate is bound at residue His463. Glu497 lines the ATP pocket. L-aspartate is bound at residue Arg504. 549-552 is a binding site for ATP; that stretch reads GMDR.

The protein belongs to the class-II aminoacyl-tRNA synthetase family. Type 1 subfamily. Homodimer.

The protein resides in the cytoplasm. It carries out the reaction tRNA(Asx) + L-aspartate + ATP = L-aspartyl-tRNA(Asx) + AMP + diphosphate. Its function is as follows. Aspartyl-tRNA synthetase with relaxed tRNA specificity since it is able to aspartylate not only its cognate tRNA(Asp) but also tRNA(Asn). Reaction proceeds in two steps: L-aspartate is first activated by ATP to form Asp-AMP and then transferred to the acceptor end of tRNA(Asp/Asn). This Anaeromyxobacter dehalogenans (strain 2CP-C) protein is Aspartate--tRNA(Asp/Asn) ligase.